A 264-amino-acid polypeptide reads, in one-letter code: 3-methyl-2-oxobutanoate hydroxymethyltransferase (264 aa).

Mg(2+) contacts are provided by D45 and D84. 3-methyl-2-oxobutanoate-binding positions include 45–46 (DS), D84, and K113. E115 contacts Mg(2+). The active-site Proton acceptor is E182.

It belongs to the PanB family. As to quaternary structure, homodecamer; pentamer of dimers. The cofactor is Mg(2+).

Its subcellular location is the cytoplasm. It catalyses the reaction 3-methyl-2-oxobutanoate + (6R)-5,10-methylene-5,6,7,8-tetrahydrofolate + H2O = 2-dehydropantoate + (6S)-5,6,7,8-tetrahydrofolate. The protein operates within cofactor biosynthesis; (R)-pantothenate biosynthesis; (R)-pantoate from 3-methyl-2-oxobutanoate: step 1/2. In terms of biological role, catalyzes the reversible reaction in which hydroxymethyl group from 5,10-methylenetetrahydrofolate is transferred onto alpha-ketoisovalerate to form ketopantoate. In Caldicellulosiruptor bescii (strain ATCC BAA-1888 / DSM 6725 / KCTC 15123 / Z-1320) (Anaerocellum thermophilum), this protein is 3-methyl-2-oxobutanoate hydroxymethyltransferase.